The chain runs to 256 residues: N-glycosylase/DNA lyase (256 aa).

Positions 31, 58, and 69 each coordinate 8-oxoguanine. The interval 125-184 (TLRQLSHIVGARREQKTLVFTIKILNYAYMCSRGVNRVLPFDIPIPVDYRVARLTWCAGL) is helix-hairpin-helix. K140 acts as the Schiff-base intermediate with DNA in catalysis. Residues F144 and P170 each contribute to the 8-oxoguanine site. The active site involves D172. D218 and W222 together coordinate 8-oxoguanine.

This sequence belongs to the archaeal N-glycosylase/DNA lyase (AGOG) family.

The enzyme catalyses 2'-deoxyribonucleotide-(2'-deoxyribose 5'-phosphate)-2'-deoxyribonucleotide-DNA = a 3'-end 2'-deoxyribonucleotide-(2,3-dehydro-2,3-deoxyribose 5'-phosphate)-DNA + a 5'-end 5'-phospho-2'-deoxyribonucleoside-DNA + H(+). Its function is as follows. DNA repair enzyme that is part of the base excision repair (BER) pathway; protects from oxidative damage by removing the major product of DNA oxidation, 8-oxoguanine (GO), from single- and double-stranded DNA substrates. The polypeptide is N-glycosylase/DNA lyase (Pyrobaculum aerophilum (strain ATCC 51768 / DSM 7523 / JCM 9630 / CIP 104966 / NBRC 100827 / IM2)).